A 238-amino-acid polypeptide reads, in one-letter code: Purine nucleoside phosphorylase DeoD-type (238 aa).

His4 provides a ligand contact to a purine D-ribonucleoside. Phosphate is bound by residues Gly20, Arg24, Arg43, and 87–90 (RVGS). Residues 179–181 (EME) and 203–204 (SD) contribute to the a purine D-ribonucleoside site. Asp204 acts as the Proton donor in catalysis.

Belongs to the PNP/UDP phosphorylase family. Homohexamer; trimer of homodimers.

It catalyses the reaction a purine D-ribonucleoside + phosphate = a purine nucleobase + alpha-D-ribose 1-phosphate. It carries out the reaction a purine 2'-deoxy-D-ribonucleoside + phosphate = a purine nucleobase + 2-deoxy-alpha-D-ribose 1-phosphate. Catalyzes the reversible phosphorolytic breakdown of the N-glycosidic bond in the beta-(deoxy)ribonucleoside molecules, with the formation of the corresponding free purine bases and pentose-1-phosphate. The polypeptide is Purine nucleoside phosphorylase DeoD-type (Pasteurella multocida (strain Pm70)).